The chain runs to 479 residues: Sulfate adenylyltransferase subunit 1 (479 aa).

One can recognise a tr-type G domain in the interval 25–239 (KSLLRFLTCG…EVLETVDIQR (215 aa)). Residues 34 to 41 (GSVDDGKS) form a G1 region. A GTP-binding site is contributed by 34–41 (GSVDDGKS). A G2 region spans residues 92–96 (GITID). Positions 113-116 (DTPG) are G3. GTP contacts are provided by residues 113-117 (DTPGH) and 168-171 (NKMD). Residues 168–171 (NKMD) form a G4 region. A G5 region spans residues 206–208 (SAL).

The protein belongs to the TRAFAC class translation factor GTPase superfamily. Classic translation factor GTPase family. CysN/NodQ subfamily. As to quaternary structure, heterodimer composed of CysD, the smaller subunit, and CysN.

It carries out the reaction sulfate + ATP + H(+) = adenosine 5'-phosphosulfate + diphosphate. Its pathway is sulfur metabolism; hydrogen sulfide biosynthesis; sulfite from sulfate: step 1/3. Its function is as follows. With CysD forms the ATP sulfurylase (ATPS) that catalyzes the adenylation of sulfate producing adenosine 5'-phosphosulfate (APS) and diphosphate, the first enzymatic step in sulfur assimilation pathway. APS synthesis involves the formation of a high-energy phosphoric-sulfuric acid anhydride bond driven by GTP hydrolysis by CysN coupled to ATP hydrolysis by CysD. The chain is Sulfate adenylyltransferase subunit 1 from Salmonella gallinarum (strain 287/91 / NCTC 13346).